Reading from the N-terminus, the 2457-residue chain is Highly reducing polyketide synthase ACTTS3 (2457 aa).

The Ketosynthase family 3 (KS3) domain occupies 5–435 (REPIAVIGSA…GTNAHVILES (431 aa)). Active-site for beta-ketoacyl synthase activity residues include Cys-179, His-316, and His-356. Positions 545–856 (RVLGIFTGQG…VMEAVLESSP (312 aa)) are malonyl-CoA:ACP transacylase (MAT) domain. Residue Ser-641 is the For malonyltransferase activity of the active site. An N-terminal hotdog fold region spans residues 938–1078 (HELLGRRTAD…GRIIIHLGSG (141 aa)). Positions 938–1244 (HELLGRRTAD…LSLKSVAEPT (307 aa)) are dehydratase (DH) domain. Residues 938–1246 (HELLGRRTAD…LKSVAEPTEE (309 aa)) form the PKS/mFAS DH domain. His-970 acts as the Proton acceptor; for dehydratase activity in catalysis. The tract at residues 1091–1246 (TDLSPVDLDR…LKSVAEPTEE (156 aa)) is C-terminal hotdog fold. The active-site Proton donor; for dehydratase activity is the Asp-1152. The segment at 1399-1587 (ETMNNCIARA…DVFYDFPDRS (189 aa)) is methyltransferase (CMet) domain. The segment at 2085–2281 (FLPDKTYLMI…SDRHIENHLR (197 aa)) is ketoreductase (KR) domain. Residues 2374–2451 (DVTTVFQQAF…EISIDATKKY (78 aa)) form the Carrier domain. Residue Ser-2411 is modified to O-(pantetheine 4'-phosphoryl)serine.

Requires pantetheine 4'-phosphate as cofactor.

It functions in the pathway mycotoxin biosynthesis. In terms of biological role, highly reducing polyketide synthase; part of the gene clusters that mediate the biosynthesis of the host-selective toxins (HSTs) ACT-toxins responsible for brown spot of tangerine disease by the tangerine pathotype which affects tangerines and mandarins. ACT-toxins consist of three moieties, 9,10-epoxy-8-hydroxy-9-methyl-decatrienoic acid (EDA), valine and a polyketide. ACT-toxin I is toxic to both citrus and pear; toxin II the 5''-deoxy derivative of ACT-toxin I, is highly toxic to pear and slightly toxic to citrus. On cellular level, ACT-toxins affect plasma membrane of susceptible cells and cause a sudden increase in loss of K(+) after a few minutes of toxin treatment. The acyl-CoA ligase ACTT1, the hydrolase ACTT2, the enoyl-CoA hydratases ACTT3 and ACTT6, and the acyl-CoA synthetase ACTT5 are all involved in the biosynthesis of the AK-, AF- and ACT-toxin common 9,10-epoxy-8-hydroxy-9-methyl-decatrienoic acid (EDA) structural moiety. The exact role of each enzyme, and of additional enzymes identified within the AF-toxin clusters have still to be determined. On the other hand, ACTTS1 to ACTTS4 are specific to the tangerine pathotype. The function of ACTTS3 is to elongate the polyketide chain portion of ACT-toxin that is unique to this toxin. The enoyl-reductase ACTTS2 might complement the missing enoyl-reductase (ER) domain in ACTTS3 in the synthesis of the polyketide portion of ACT-toxin. The roles of the nonribosomal peptide synthetases-related proteins ACTTS1 and ACTTS4 have also still not been elucidated. This Alternaria alternata (Alternaria rot fungus) protein is Highly reducing polyketide synthase ACTTS3.